We begin with the raw amino-acid sequence, 559 residues long: GTP diphosphokinase CRSH2, chloroplastic (559 aa).

A chloroplast-targeting transit peptide spans 1 to 37 (MASAGGEVVVVDPAAAAVAPDVEHHAPAPRLTPAGSG). The HD domain occupies 87-187 (SLARALIVAA…LELAIRLDAM (101 aa)). 2 EF-hand domains span residues 449 to 484 (ASAGNIERAFRLLDKNGDGRISMEELTELMEDLGAG) and 486 to 518 (KDAEELMRLLDDNNDGSLSSDEFALFQKRVELK). Aspartate 462, asparagine 464, aspartate 466, arginine 468, glutamate 473, aspartate 496, asparagine 498, aspartate 500, serine 502, and glutamate 507 together coordinate Ca(2+).

It belongs to the RelA/SpoT family. In terms of tissue distribution, expressed in shoots.

The protein localises to the plastid. It localises to the chloroplast. It catalyses the reaction GTP + ATP = guanosine 3'-diphosphate 5'-triphosphate + AMP. Its activity is regulated as follows. Activated by calcium. Functionally, possesses calcium-dependent ppGpp (guanosine 3'-diphosphate 5'-diphosphate) synthetase activity in vitro and is able to functionally complement E.coli relA mutants. May be involved in a rapid plant ppGpp-mediated response to pathogens and other stresses. The chain is GTP diphosphokinase CRSH2, chloroplastic from Oryza sativa subsp. japonica (Rice).